The chain runs to 87 residues: uncharacterized protein (87 aa).

The disordered stretch occupies residues 43-87; sequence NQGYGQNFGDASGFMGTRSHVDDRDQIDSPASFESEAVNSSIKRK.

This is an uncharacterized protein from Bacillus subtilis (strain 168).